The primary structure comprises 134 residues: Phosphoribosyl-ATP pyrophosphatase (134 aa).

This sequence belongs to the PRA-PH family.

The protein resides in the cytoplasm. It carries out the reaction 1-(5-phospho-beta-D-ribosyl)-ATP + H2O = 1-(5-phospho-beta-D-ribosyl)-5'-AMP + diphosphate + H(+). It functions in the pathway amino-acid biosynthesis; L-histidine biosynthesis; L-histidine from 5-phospho-alpha-D-ribose 1-diphosphate: step 2/9. The sequence is that of Phosphoribosyl-ATP pyrophosphatase from Verminephrobacter eiseniae (strain EF01-2).